A 303-amino-acid polypeptide reads, in one-letter code: Glycine--tRNA ligase alpha subunit (303 aa).

The protein belongs to the class-II aminoacyl-tRNA synthetase family. As to quaternary structure, tetramer of two alpha and two beta subunits.

The protein localises to the cytoplasm. It carries out the reaction tRNA(Gly) + glycine + ATP = glycyl-tRNA(Gly) + AMP + diphosphate. This is Glycine--tRNA ligase alpha subunit from Stenotrophomonas maltophilia (strain R551-3).